The chain runs to 37 residues: Large ribosomal subunit protein bL36 (37 aa).

The protein belongs to the bacterial ribosomal protein bL36 family.

The polypeptide is Large ribosomal subunit protein bL36 (Alkaliphilus metalliredigens (strain QYMF)).